A 311-amino-acid chain; its full sequence is MTTQPSHLSVLLQESIDGLAIKPDGVYLDATFGRGGHTKQILSQLSPNGRLIALDRDPSAIEAAKALADDARFSIHHCNFSEMEDVLTSLELHGKVDGILMDLGVSSPQLDEPERGFSFMREGPLDMRMNPTKGQSAAQWLAHAEEQDIAQVIKEFGEEKFGKRIAHGIVNARQEAPITTTAQLAEIIDLAVPVKDKFKHPATRSFQGIRIYINSELDEIRTGLKAALNSLNSGGRLSVISFHSLEDRLVKRFIREQSRGLQVPHGLPIMQAEIDSHKAMKAIGKAIKPSSDELSRNVRARSSVLRVAEKL.

Residues 35-37 (GGH), Asp55, Phe80, Asp102, and Gln109 contribute to the S-adenosyl-L-methionine site.

It belongs to the methyltransferase superfamily. RsmH family.

Its subcellular location is the cytoplasm. It catalyses the reaction cytidine(1402) in 16S rRNA + S-adenosyl-L-methionine = N(4)-methylcytidine(1402) in 16S rRNA + S-adenosyl-L-homocysteine + H(+). In terms of biological role, specifically methylates the N4 position of cytidine in position 1402 (C1402) of 16S rRNA. The protein is Ribosomal RNA small subunit methyltransferase H of Pseudoalteromonas atlantica (strain T6c / ATCC BAA-1087).